The sequence spans 421 residues: NADP(+)-dependent glutamate dehydrogenase (421 aa).

2 residues coordinate substrate: K70 and K94. K106 acts as the Proton donor in catalysis. Positions 190 and 221 each coordinate NADP(+). S354 is a binding site for substrate.

Belongs to the Glu/Leu/Phe/Val dehydrogenases family. As to quaternary structure, homohexamer.

It carries out the reaction L-glutamate + NADP(+) + H2O = 2-oxoglutarate + NH4(+) + NADPH + H(+). With respect to regulation, is not regulated allosterically. Activity is inhibited in the presence of high ionic strength; the inhibitory effect of KCl is slightly higher than that of NaCl. In terms of biological role, catalyzes the reversible oxidative deamination of L-glutamate to 2-oxoglutarate and ammonia, thereby playing a key role at the intersection of the carbon and nitrogen metabolic pathways. Shows a high preference for NADP(+)/NADPH as the acceptor/donor over NAD(+)/NADH. May function in vivo in the synthetic direction. Also catalyzes at very low rates the oxidative deamination of L-2-aminobutyrate, and the reductive amination of 2-oxovalerate and 2-oxobutyrate. The polypeptide is NADP(+)-dependent glutamate dehydrogenase (Pyrobaculum calidifontis (strain DSM 21063 / JCM 11548 / VA1)).